A 379-amino-acid chain; its full sequence is Anthranilate O-methyltransferase 3 (379 aa).

A compositionally biased stretch (basic and acidic residues) spans M1 to H10. The disordered stretch occupies residues M1–T21. Residue Y20 participates in S-adenosyl-L-homocysteine binding. Anthranilate is bound at residue Q27. Residues C61, N66, D100, L101, S143, and F144 each coordinate S-adenosyl-L-homocysteine. Residues H164 and W165 each contribute to the anthranilate site. The Mg(2+) site is built by E265 and F267.

Belongs to the methyltransferase superfamily. Type-7 methyltransferase family. SABATH subfamily.

It catalyses the reaction anthranilate + S-adenosyl-L-methionine = O-methyl anthranilate + S-adenosyl-L-homocysteine. The enzyme catalyses benzoate + S-adenosyl-L-methionine = methyl benzoate + S-adenosyl-L-homocysteine. It carries out the reaction salicylate + S-adenosyl-L-methionine = methyl salicylate + S-adenosyl-L-homocysteine. Its function is as follows. Methyltransferase involved in the biosynthesis of methyl anthranilate in response to stresses. Utilizes anthranilic acid as substrate. Produces exclusively the O-methyl ester. Can also use benzoic acid as substrate. Low activity with salicylic acid. The protein is Anthranilate O-methyltransferase 3 (AAMT3) of Zea mays (Maize).